The primary structure comprises 147 residues: Large ribosomal subunit protein uL13 (147 aa).

This sequence belongs to the universal ribosomal protein uL13 family. As to quaternary structure, part of the 50S ribosomal subunit.

Functionally, this protein is one of the early assembly proteins of the 50S ribosomal subunit, although it is not seen to bind rRNA by itself. It is important during the early stages of 50S assembly. This is Large ribosomal subunit protein uL13 from Mycobacteroides abscessus (strain ATCC 19977 / DSM 44196 / CCUG 20993 / CIP 104536 / JCM 13569 / NCTC 13031 / TMC 1543 / L948) (Mycobacterium abscessus).